Here is a 323-residue protein sequence, read N- to C-terminus: MGNAIRLLRKCLNSHGVSASSGGVSALSRDLLNFETTSQVPEKLGSYVVSSQKAQANWYRKILEAWKQAKPRPKTPEEASRLVIAALKNHQKADVEGLLSFYGLPSPHNLVEVPTEAPVSLPKGVRFELNTLPVDTKSVADGDTVTVYVSSKDPLVSSSLPKDVSLAAVKRAKAREKKNYTEADALHKTIIASGYRMISFQNEEVLAKKFRIRLSGIDSPESKMPYGKEAHDELLKMVEGKCLKVLVYTEDRYGRCVGDIYCNGKFVQEVMLKKGLAWHYVAYDKRAELAKWENEARQKRVGLWASSNPEKPWEWRKNKRGGN.

Residue G2 is the site of N-myristoyl glycine attachment. C11 carries S-palmitoyl cysteine lipidation. Positions 130 to 306 (NTLPVDTKSV…RQKRVGLWAS (177 aa)) constitute a TNase-like domain. Position 143 (D143) interacts with Ca(2+). Residue R213 is part of the active site. A Ca(2+)-binding site is contributed by D218. Residues E221 and R255 contribute to the active site.

The protein belongs to the thermonuclease family. Ca(2+) serves as cofactor.

It localises to the cell membrane. Its activity is regulated as follows. Inhibited by Zn(2+). Its function is as follows. Enzyme that catalyzes the hydrolysis of both DNA and RNA at the 5' position of the phosphodiester bond. Possesses activity toward the single-stranded DNA, double-stranded DNA and RNA. May be involved in genomic DNA degradation during programmed cell death. The protein is Staphylococcal-like nuclease CAN1 (CAN1) of Arabidopsis thaliana (Mouse-ear cress).